The sequence spans 650 residues: Secretin OutD (650 aa).

Positions 1–18 (MLLLSGSVLLMASSLAWS) are cleaved as a signal peptide. The tract at residues 20 to 115 (EFSASFKGTD…LATDRQPGIG (96 aa)) is N0. The interval 117–181 (EVVTRVVPVN…TIVERVDQTG (65 aa)) is N1. Residues 182-255 (DRNVTTIPLS…MVKQLDRQQA (74 aa)) are N2. The segment at 258–330 (GNTKVIYLKY…DLEQVIAQLD (73 aa)) is N3. The tract at residues 335–585 (QVLVEAIIAE…LFIRPSIIRD (251 aa)) is secretin. Positions 587-650 (SQFQSASASK…IVAFYPAGGK (64 aa)) are s domain.

This sequence belongs to the bacterial secretin family. GSP D subfamily. In terms of assembly, forms a cylindrical channel with 15 subunits.

It localises to the cell outer membrane. Its function is as follows. Involved in a type II secretion system (T2SS, formerly general secretion pathway, GSP) for the export of proteins. Required for the translocation of the multiple pectic enzymes. This subunit forms the outer membrane channel. The chain is Secretin OutD (outD) from Pectobacterium carotovorum subsp. carotovorum (Erwinia carotovora subsp. carotovora).